The primary structure comprises 146 residues: Hemoglobin subunit delta (146 aa).

One can recognise a Globin domain in the interval 2 to 146 (HLTGDEKSAV…VATALAHKYH (145 aa)). At Ser-50 the chain carries Phosphoserine. Heme b is bound by residues His-63 and His-92.

Belongs to the globin family. Heterotetramer of two delta chains and two alpha chains. In terms of tissue distribution, red blood cells.

The polypeptide is Hemoglobin subunit delta (HBD) (Saimiri sciureus (Common squirrel monkey)).